The sequence spans 113 residues: MNTVRVTFLLVFVLAVSLGQADKDENRMEMQEKTEQGKSYLDFAENLLLQKLEELEAKLLEEDSKESRNSRQKRCIGEGVPCDENDPRCCSGLVCLKPTLHGIWYKSYYCYRK.

Residues methionine 1–alanine 21 form the signal peptide. A propeptide spanning residues aspartate 22–arginine 74 is cleaved from the precursor. The segment at glutamate 61 to cysteine 82 is disordered. 3 disulfides stabilise this stretch: cysteine 75-cysteine 90, cysteine 82-cysteine 95, and cysteine 89-cysteine 110.

Belongs to the neurotoxin 14 (magi-1) family. 01 (HNTX-16) subfamily. As to expression, expressed by the venom gland.

It localises to the secreted. Its function is as follows. Probable ion channel inhibitor. The chain is U11-theraphotoxin-Hhn1f from Cyriopagopus hainanus (Chinese bird spider).